The following is a 512-amino-acid chain: Kelch repeat protein C2 (512 aa).

Residues 2-67 (ESVIFSINGE…MRWKKINITI (66 aa)) form the BTB domain. 6 Kelch repeats span residues 216–261 (IKHN…LHNC), 262–307 (LYII…VNDG), 309–354 (LYVI…FVND), 356–403 (IYVM…EYDG), 405–449 (IYVI…SCGD), and 452–498 (LIIA…THKS).

Belongs to the poxviruses Kelch family.

This chain is Kelch repeat protein C2, found in Vaccinia virus (strain Copenhagen) (VACV).